A 297-amino-acid polypeptide reads, in one-letter code: Large ribosomal subunit protein uL18 (297 aa).

G2 is subject to N-acetylglycine. N6-acetyllysine is present on residues K5 and K48. A Phosphoserine modification is found at S185. K220 carries the N6-acetyllysine; alternate modification. K220 is covalently cross-linked (Glycyl lysine isopeptide (Lys-Gly) (interchain with G-Cter in SUMO1); alternate). K220 participates in a covalent cross-link: Glycyl lysine isopeptide (Lys-Gly) (interchain with G-Cter in SUMO2); alternate. T232 is modified (phosphothreonine). Positions 253-297 are disordered; the sequence is YEKKPKKEVKKKRWNRPKMSLAQKKDRVAQKKASFLRAQERAAES. Basic residues predominate over residues 258-268; the sequence is KKEVKKKRWNR. S272 is subject to Phosphoserine.

This sequence belongs to the universal ribosomal protein uL18 family. Component of the large ribosomal subunit (LSU). Part of the 5S RNP complex, which is a LSU subcomplex composed of the 5S RNA, RPL5 and RPL11. Component of a hexameric 5S RNP precursor complex, composed of 5S RNA, RRS1, RPF2/BXDC1, RPL5, RPL11 and HEATR3; this complex acts as a precursor for ribosome assembly. Interacts with isoform 1 of NVL in an ATP-dependent manner. Interacts with RRP1B. Interacts with IPO5, IPO7 and KPNB1; these interactions may be involved in RPL5 nuclear import for the assembly of ribosomal subunits.

The protein localises to the cytoplasm. Its subcellular location is the nucleus. The protein resides in the nucleolus. Component of the ribosome, a large ribonucleoprotein complex responsible for the synthesis of proteins in the cell. The small ribosomal subunit (SSU) binds messenger RNAs (mRNAs) and translates the encoded message by selecting cognate aminoacyl-transfer RNA (tRNA) molecules. The large subunit (LSU) contains the ribosomal catalytic site termed the peptidyl transferase center (PTC), which catalyzes the formation of peptide bonds, thereby polymerizing the amino acids delivered by tRNAs into a polypeptide chain. The nascent polypeptides leave the ribosome through a tunnel in the LSU and interact with protein factors that function in enzymatic processing, targeting, and the membrane insertion of nascent chains at the exit of the ribosomal tunnel. As part of the 5S RNP/5S ribonucleoprotein particle it is an essential component of the LSU, required for its formation and the maturation of rRNAs. It also couples ribosome biogenesis to p53/TP53 activation. As part of the 5S RNP it accumulates in the nucleoplasm and inhibits MDM2, when ribosome biogenesis is perturbed, mediating the stabilization and the activation of TP53. The chain is Large ribosomal subunit protein uL18 (RPL5) from Homo sapiens (Human).